The following is a 516-amino-acid chain: D-alanine--D-alanyl carrier protein ligase (516 aa).

156–157 (TS) is a binding site for ATP. Asp-203 is a D-alanine binding site. 298–303 (NAYGPT) serves as a coordination point for ATP. Val-307 contributes to the D-alanine binding site. Residues Asp-389, 401–404 (YGGR), and Lys-503 each bind ATP. Lys-503 is a D-alanine binding site.

It belongs to the ATP-dependent AMP-binding enzyme family. DltA subfamily.

The protein localises to the cytoplasm. The catalysed reaction is holo-[D-alanyl-carrier protein] + D-alanine + ATP = D-alanyl-[D-alanyl-carrier protein] + AMP + diphosphate. It participates in cell wall biogenesis; lipoteichoic acid biosynthesis. Catalyzes the first step in the D-alanylation of lipoteichoic acid (LTA), the activation of D-alanine and its transfer onto the D-alanyl carrier protein (Dcp) DltC. In an ATP-dependent two-step reaction, forms a high energy D-alanyl-AMP intermediate, followed by transfer of the D-alanyl residue as a thiol ester to the phosphopantheinyl prosthetic group of the Dcp. D-alanylation of LTA plays an important role in modulating the properties of the cell wall in Gram-positive bacteria, influencing the net charge of the cell wall. In Streptococcus pneumoniae (strain ATCC 700669 / Spain 23F-1), this protein is D-alanine--D-alanyl carrier protein ligase.